Reading from the N-terminus, the 239-residue chain is Ribonuclease PH (239 aa).

Residues Arg-86 and 124 to 126 contribute to the phosphate site; that span reads GTR.

The protein belongs to the RNase PH family. In terms of assembly, homohexameric ring arranged as a trimer of dimers.

It carries out the reaction tRNA(n+1) + phosphate = tRNA(n) + a ribonucleoside 5'-diphosphate. Phosphorolytic 3'-5' exoribonuclease that plays an important role in tRNA 3'-end maturation. Removes nucleotide residues following the 3'-CCA terminus of tRNAs; can also add nucleotides to the ends of RNA molecules by using nucleoside diphosphates as substrates, but this may not be physiologically important. Probably plays a role in initiation of 16S rRNA degradation (leading to ribosome degradation) during starvation. The polypeptide is Ribonuclease PH (Rhizobium johnstonii (strain DSM 114642 / LMG 32736 / 3841) (Rhizobium leguminosarum bv. viciae)).